The sequence spans 127 residues: Putative defensin-like protein 180 (127 aa).

The N-terminal stretch at 1–26 (MERITSLVFFASFLIIFVSGVNQTRA) is a signal peptide. Intrachain disulfides connect Cys29-Cys70, Cys36-Cys55, Cys39-Cys64, Cys43-Cys66, Cys81-Cys127, Cys92-Cys112, Cys97-Cys121, and Cys101-Cys123.

It belongs to the DEFL family.

It is found in the secreted. The polypeptide is Putative defensin-like protein 180 (LCR58) (Arabidopsis thaliana (Mouse-ear cress)).